Here is a 229-residue protein sequence, read N- to C-terminus: 2-C-methyl-D-erythritol 4-phosphate cytidylyltransferase (229 aa).

It belongs to the IspD/TarI cytidylyltransferase family. IspD subfamily.

The catalysed reaction is 2-C-methyl-D-erythritol 4-phosphate + CTP + H(+) = 4-CDP-2-C-methyl-D-erythritol + diphosphate. The protein operates within isoprenoid biosynthesis; isopentenyl diphosphate biosynthesis via DXP pathway; isopentenyl diphosphate from 1-deoxy-D-xylulose 5-phosphate: step 2/6. Functionally, catalyzes the formation of 4-diphosphocytidyl-2-C-methyl-D-erythritol from CTP and 2-C-methyl-D-erythritol 4-phosphate (MEP). This is 2-C-methyl-D-erythritol 4-phosphate cytidylyltransferase from Clostridium botulinum (strain ATCC 19397 / Type A).